The chain runs to 258 residues: Ribosomal RNA large subunit methyltransferase E (258 aa).

S-adenosyl-L-methionine-binding residues include G58, W60, D78, D96, and D120. K160 acts as the Proton acceptor in catalysis.

It belongs to the class I-like SAM-binding methyltransferase superfamily. RNA methyltransferase RlmE family.

Its subcellular location is the cytoplasm. It catalyses the reaction uridine(2552) in 23S rRNA + S-adenosyl-L-methionine = 2'-O-methyluridine(2552) in 23S rRNA + S-adenosyl-L-homocysteine + H(+). Functionally, specifically methylates the uridine in position 2552 of 23S rRNA at the 2'-O position of the ribose in the fully assembled 50S ribosomal subunit. The protein is Ribosomal RNA large subunit methyltransferase E of Methanococcus maripaludis (strain DSM 14266 / JCM 13030 / NBRC 101832 / S2 / LL).